The chain runs to 753 residues: 5-methyltetrahydropteroyltriglutamate--homocysteine methyltransferase (753 aa).

5-methyltetrahydropteroyltri-L-glutamate is bound by residues 17 to 20 (RELK) and Lys-117. Residues 431 to 433 (IGS) and Glu-484 contribute to the L-homocysteine site. Residues 431–433 (IGS) and Glu-484 each bind L-methionine. 5-methyltetrahydropteroyltri-L-glutamate-binding positions include 515-516 (RC) and Trp-561. Asp-599 is a binding site for L-homocysteine. Asp-599 is a binding site for L-methionine. Glu-605 serves as a coordination point for 5-methyltetrahydropteroyltri-L-glutamate. Residues His-641, Cys-643, and Glu-665 each coordinate Zn(2+). His-694 functions as the Proton donor in the catalytic mechanism. Position 726 (Cys-726) interacts with Zn(2+).

The protein belongs to the vitamin-B12 independent methionine synthase family. It depends on Zn(2+) as a cofactor.

The catalysed reaction is 5-methyltetrahydropteroyltri-L-glutamate + L-homocysteine = tetrahydropteroyltri-L-glutamate + L-methionine. It functions in the pathway amino-acid biosynthesis; L-methionine biosynthesis via de novo pathway; L-methionine from L-homocysteine (MetE route): step 1/1. Catalyzes the transfer of a methyl group from 5-methyltetrahydrofolate to homocysteine resulting in methionine formation. This Escherichia coli O6:H1 (strain CFT073 / ATCC 700928 / UPEC) protein is 5-methyltetrahydropteroyltriglutamate--homocysteine methyltransferase.